The sequence spans 142 residues: Small ribosomal subunit protein uS12 (142 aa).

It belongs to the universal ribosomal protein uS12 family. As to quaternary structure, part of the 30S ribosomal subunit.

Functionally, with S4 and S5 plays an important role in translational accuracy. Located at the interface of the 30S and 50S subunits. This is Small ribosomal subunit protein uS12 from Methanospirillum hungatei JF-1 (strain ATCC 27890 / DSM 864 / NBRC 100397 / JF-1).